The following is a 349-amino-acid chain: Small ribosomal subunit biogenesis GTPase RsgA (349 aa).

The span at 1–11 (MSKKKLSKGQQ) shows a compositional bias: basic residues. The segment at 1 to 29 (MSKKKLSKGQQRRVSANHQRRLKKTESKV) is disordered. Residues 102-272 (HSVLTRPDYY…VIDSPGVREF (171 aa)) enclose the CP-type G domain. GTP is bound by residues 158-161 (NKID) and 212-220 (GQSGVGKSS). The Zn(2+) site is built by cysteine 296, cysteine 301, histidine 303, and cysteine 309.

This sequence belongs to the TRAFAC class YlqF/YawG GTPase family. RsgA subfamily. As to quaternary structure, monomer. Associates with 30S ribosomal subunit, binds 16S rRNA. It depends on Zn(2+) as a cofactor.

It localises to the cytoplasm. One of several proteins that assist in the late maturation steps of the functional core of the 30S ribosomal subunit. Helps release RbfA from mature subunits. May play a role in the assembly of ribosomal proteins into the subunit. Circularly permuted GTPase that catalyzes slow GTP hydrolysis, GTPase activity is stimulated by the 30S ribosomal subunit. This Pectobacterium carotovorum subsp. carotovorum (strain PC1) protein is Small ribosomal subunit biogenesis GTPase RsgA.